Here is a 69-residue protein sequence, read N- to C-terminus: uncharacterized protein (69 aa).

This is an uncharacterized protein from Escherichia coli O6:H1 (strain CFT073 / ATCC 700928 / UPEC).